Here is a 277-residue protein sequence, read N- to C-terminus: MASAGGGGSESAAPEADRPQPRPFLIGVSGGTASGKSTVCEKIMELLGQNEVDRRQRKLVILSQDCFYKVLTAEQKAKALKGQYNFDHPDAFDNDLMHKTLKNIVEGKTVEVPTYDFVTHSRLPETTVVYPADVVLFEGILVFYTQEIRDMFHLRLFVDTDSDVRLSRRVLRDVQRGRDLEQILTQYTAFVKPAFEEFCLPTKKYADVIIPRGVDNMVAINLIVQHIQDILNGDLCKRHRGGPNGRNHKRTFPEPGDHPGVLATGKRSHLESSSRPH.

The tract at residues 1-30 (MASAGGGGSESAAPEADRPQPRPFLIGVSG) is disordered. 30 to 38 (GGTASGKST) provides a ligand contact to ATP. The substrate site is built by Asp87, Tyr115, His120, Arg169, Arg178, and Gln186. Residue Asp215 participates in ATP binding. Residues 238–250 (RHRGGPNGRNHKR) show a composition bias toward basic residues. A disordered region spans residues 238 to 277 (RHRGGPNGRNHKRTFPEPGDHPGVLATGKRSHLESSSRPH). Thr251 is subject to Phosphothreonine. Positions 268 to 277 (SHLESSSRPH) are enriched in basic and acidic residues.

It belongs to the uridine kinase family.

It carries out the reaction uridine + ATP = UMP + ADP + H(+). The catalysed reaction is cytidine + ATP = CMP + ADP + H(+). The protein operates within pyrimidine metabolism; CTP biosynthesis via salvage pathway; CTP from cytidine: step 1/3. Its pathway is pyrimidine metabolism; UMP biosynthesis via salvage pathway; UMP from uridine: step 1/1. Its function is as follows. Phosphorylates uridine and cytidine to uridine monophosphate and cytidine monophosphate. Does not phosphorylate deoxyribonucleosides or purine ribonucleosides. Can use ATP or GTP as a phosphate donor. This chain is Uridine-cytidine kinase 1 (Uck1), found in Mus musculus (Mouse).